Reading from the N-terminus, the 393-residue chain is Myb-related transcription factor, partner of profilin (393 aa).

Over residues 1-11 (MASATAAAAPG) the composition is skewed to low complexity. The segment at 1 to 21 (MASATAAAAPGEAEETTRLRK) is disordered. The 73-residue stretch at 16–88 (TTRLRKPRFS…EVQKRWNDFK (73 aa)) folds into the Myb-like domain. The short motif at 87–90 (FKRR) is the Nuclear localization signal element. 3 disordered regions span residues 125–254 (GPGV…EQSL), 290–323 (PLLP…APKV), and 348–393 (IISP…WKSP). The span at 142-157 (AAASSQPQASTASTQR) shows a compositional bias: low complexity. Residues 160-171 (LSEDRRQDRRAD) show a composition bias toward basic and acidic residues. Over residues 173 to 184 (PAQSKGGSSSPE) the composition is skewed to polar residues. Pro residues-rich tracts occupy residues 219 to 229 (PPLPAPPPPPT), 238 to 247 (SPSPTPPRPT), 296 to 320 (PADP…PPSA), and 359 to 368 (KPLPPAPPLP). Positions 375–393 (HKRRKGFPTRKRRGRWKSP) are enriched in basic residues. 2 consecutive short sequence motifs (nuclear localization signal) follow at residues 376-379 (KRRK) and 384-387 (RKRR).

As to quaternary structure, interacts with PFN1. Homodimer and heterodimer with PFN1. In terms of tissue distribution, ubiquitous. Highly expressed in brain, liver and testis. Moderate expression in heart, lung and skeletal muscle. Low expression in spleen and kidney.

It localises to the nucleus. In terms of biological role, transcriptional repressor; DNA-binding protein that specifically recognizes the core sequence 5'-YAAC[GT]G-3'. Dimerization with PFN1 reduces its DNA-binding capacity. The polypeptide is Myb-related transcription factor, partner of profilin (Mypop) (Mus musculus (Mouse)).